The chain runs to 426 residues: Phosphomethylpyrimidine synthase (426 aa).

Substrate contacts are provided by residues Met-94, Tyr-123, His-162, 184 to 186, 225 to 228, and Glu-264; these read SRG and NGMR. Zn(2+) is bound at residue His-268. Tyr-291 is a substrate binding site. His-332 contributes to the Zn(2+) binding site. Residues Cys-406, Cys-409, and Cys-413 each coordinate [4Fe-4S] cluster.

It belongs to the ThiC family. [4Fe-4S] cluster serves as cofactor.

The catalysed reaction is 5-amino-1-(5-phospho-beta-D-ribosyl)imidazole + S-adenosyl-L-methionine = 4-amino-2-methyl-5-(phosphooxymethyl)pyrimidine + CO + 5'-deoxyadenosine + formate + L-methionine + 3 H(+). The protein operates within cofactor biosynthesis; thiamine diphosphate biosynthesis. Functionally, catalyzes the synthesis of the hydroxymethylpyrimidine phosphate (HMP-P) moiety of thiamine from aminoimidazole ribotide (AIR) in a radical S-adenosyl-L-methionine (SAM)-dependent reaction. The chain is Phosphomethylpyrimidine synthase from Methanospirillum hungatei JF-1 (strain ATCC 27890 / DSM 864 / NBRC 100397 / JF-1).